Reading from the N-terminus, the 330-residue chain is Ketol-acid reductoisomerase (NADP(+)) (330 aa).

In terms of domain architecture, KARI N-terminal Rossmann spans 2–182 (ARMYYDEDAN…GGTRAGVLET (181 aa)). NADP(+)-binding positions include 25 to 28 (YGSQ), Ser51, Ser53, and 83 to 86 (DEVQ). The active site involves His108. Gly134 serves as a coordination point for NADP(+). In terms of domain architecture, KARI C-terminal knotted spans 183 to 328 (TFREETETDL…QDLRAMMSWL (146 aa)). Residues Asp191, Glu195, Glu227, and Glu231 each contribute to the Mg(2+) site. Substrate is bound at residue Ser252.

This sequence belongs to the ketol-acid reductoisomerase family. Mg(2+) is required as a cofactor.

It catalyses the reaction (2R)-2,3-dihydroxy-3-methylbutanoate + NADP(+) = (2S)-2-acetolactate + NADPH + H(+). The enzyme catalyses (2R,3R)-2,3-dihydroxy-3-methylpentanoate + NADP(+) = (S)-2-ethyl-2-hydroxy-3-oxobutanoate + NADPH + H(+). It participates in amino-acid biosynthesis; L-isoleucine biosynthesis; L-isoleucine from 2-oxobutanoate: step 2/4. Its pathway is amino-acid biosynthesis; L-valine biosynthesis; L-valine from pyruvate: step 2/4. Functionally, involved in the biosynthesis of branched-chain amino acids (BCAA). Catalyzes an alkyl-migration followed by a ketol-acid reduction of (S)-2-acetolactate (S2AL) to yield (R)-2,3-dihydroxy-isovalerate. In the isomerase reaction, S2AL is rearranged via a Mg-dependent methyl migration to produce 3-hydroxy-3-methyl-2-ketobutyrate (HMKB). In the reductase reaction, this 2-ketoacid undergoes a metal-dependent reduction by NADPH to yield (R)-2,3-dihydroxy-isovalerate. This Microcystis aeruginosa (strain NIES-843 / IAM M-2473) protein is Ketol-acid reductoisomerase (NADP(+)).